Here is a 431-residue protein sequence, read N- to C-terminus: Na(+)-translocating NADH-quinone reductase subunit F (431 aa).

The helical transmembrane segment at I10–L30 threads the bilayer. Residues C41–Y133 form the 2Fe-2S ferredoxin-type domain. The [2Fe-2S] cluster site is built by C76, C82, C85, and C117. Residues A136 to K286 enclose the FAD-binding FR-type domain. The catalytic stretch occupies residues N289 to L413.

The protein belongs to the NqrF family. Composed of six subunits; NqrA, NqrB, NqrC, NqrD, NqrE and NqrF. It depends on [2Fe-2S] cluster as a cofactor. The cofactor is FAD.

Its subcellular location is the cell inner membrane. The enzyme catalyses a ubiquinone + n Na(+)(in) + NADH + H(+) = a ubiquinol + n Na(+)(out) + NAD(+). Its function is as follows. NQR complex catalyzes the reduction of ubiquinone-1 to ubiquinol by two successive reactions, coupled with the transport of Na(+) ions from the cytoplasm to the periplasm. The first step is catalyzed by NqrF, which accepts electrons from NADH and reduces ubiquinone-1 to ubisemiquinone by a one-electron transfer pathway. The polypeptide is Na(+)-translocating NADH-quinone reductase subunit F (Chlamydia muridarum (strain MoPn / Nigg)).